A 775-amino-acid polypeptide reads, in one-letter code: Acylamino-acid-releasing enzyme 1 (775 aa).

Catalysis depends on charge relay system residues S627, D718, and H750.

Belongs to the peptidase S9C family. In terms of assembly, homotetramer.

It localises to the cytoplasm. The catalysed reaction is Cleavage of an N-acetyl or N-formyl amino acid from the N-terminus of a polypeptide.. Catalyzes the hydrolysis of the N-terminal peptide bond of an N-acetylated peptide to generate an N-acetylated amino acid and a peptide with a free N-terminus. This chain is Acylamino-acid-releasing enzyme 1, found in Oryza sativa subsp. japonica (Rice).